A 405-amino-acid polypeptide reads, in one-letter code: Prostaglandin E2 receptor EP1 subtype (405 aa).

Residues 1–39 (MSPCGLNLSLADEAATCATPRLPNTSVVLPTGDNGTSPA) are Extracellular-facing. N-linked (GlcNAc...) asparagine glycosylation is found at N7, N24, and N34. A helical membrane pass occupies residues 40 to 62 (LPIFSMTLGAVSNVLALALLAQV). At 63-80 (AGRMRRRRSAATFLLFVA) the chain is on the cytoplasmic side. A helical membrane pass occupies residues 81–99 (SLLAIDLAGHVIPGALVLR). Over 100 to 113 (LYTAGRAPAGGACH) the chain is Extracellular. Cysteines 112 and 190 form a disulfide. A helical membrane pass occupies residues 114 to 135 (FLGGCMVFFGLCPLLLGCGMAV). At 136-157 (ERCVGVTQPLIHAARVSVARAR) the chain is on the cytoplasmic side. Residues 158–179 (LALAVLAAMALAVALLPLVHVG) traverse the membrane as a helical segment. The Extracellular segment spans residues 180-202 (RYELQYPGTWCFISLGPRGGWRQ). The chain crosses the membrane as a helical span at residues 203–228 (ALLAGLFAGLGLAALLAALVCNTLSG). The Cytoplasmic portion of the chain corresponds to 229-301 (LALLRARWRR…HAHDVEMVGQ (73 aa)). Residues 243–287 (RFRKTAGPDDRRRWGSRGPRLASASSASSITSATATLRSSRGGGS) are disordered. A compositionally biased stretch (low complexity) spans 262-282 (RLASASSASSITSATATLRSS). Residues 302 to 323 (LVGIMVVSCICWSPLLVLVVLA) form a helical membrane-spanning segment. Over 324–337 (IGGWNSNSLQRPLF) the chain is Extracellular. The chain crosses the membrane as a helical span at residues 338–357 (LAVRLASWNQILDPWVYILL). At 358-405 (RQAMLRQLLRLLPLRVSAKGGPTELGLTKSAWEASSLRSSRHSGFSHL) the chain is on the cytoplasmic side.

The protein belongs to the G-protein coupled receptor 1 family. In terms of processing, phosphorylated. Abundant in kidney and in a lesser amount in lung.

It localises to the cell membrane. In terms of biological role, receptor for prostaglandin E2 (PGE2). The activity of this receptor is mediated by G(q) proteins which activate a phosphatidylinositol-calcium second messenger system. May play a role as an important modulator of renal function. Implicated the smooth muscle contractile response to PGE2 in various tissues. The protein is Prostaglandin E2 receptor EP1 subtype (Ptger1) of Mus musculus (Mouse).